The sequence spans 552 residues: CCR4-NOT transcription complex subunit 6 (552 aa).

4 LRR repeats span residues 52 to 73 (HLTA…IAKL), 75 to 96 (NLVY…LGNM), 98 to 120 (SLRE…GKLF), and 121 to 143 (QLQT…CLEP). A nuclease domain region spans residues 153-552 (LLDNLSVSTE…VNGIHLPGRR (400 aa)). Mg(2+) is bound at residue Glu235. Positions 235, 271, 356, and 361 each coordinate substrate. Asp407 serves as a coordination point for Mg(2+). Asp407 (proton donor/acceptor) is an active-site residue. Residues Asn409, Asn476, and Phe481 each contribute to the substrate site.

The protein belongs to the CCR4/nocturin family. Subunit of the CCR4-NOT core complex. The cofactor is Mg(2+).

Its subcellular location is the cytoplasm. The protein resides in the nucleus. It catalyses the reaction Exonucleolytic cleavage of poly(A) to 5'-AMP.. Functionally, poly(A) nuclease involved in mRNA decay. Has 3'-5' RNase activity. The CCR4-NOT complex functions as a general transcription regulation complex. Enhances ligand-dependent transcriptional activity of nuclear hormone receptors. The chain is CCR4-NOT transcription complex subunit 6 (cnot6) from Xenopus laevis (African clawed frog).